Here is a 388-residue protein sequence, read N- to C-terminus: Processive diacylglycerol beta-glucosyltransferase (388 aa).

Belongs to the glycosyltransferase 28 family. UgtP subfamily.

Its subcellular location is the cell membrane. The catalysed reaction is a 1,2-diacyl-3-O-(beta-D-glucopyranosyl)-sn-glycerol + UDP-alpha-D-glucose = a 1,2-diacyl-3-O-(beta-D-Glc-(1-&gt;6)-beta-D-Glc)-sn-glycerol + UDP + H(+). It catalyses the reaction a 1,2-diacyl-3-O-(beta-D-Glc-(1-&gt;6)-beta-D-Glc)-sn-glycerol + UDP-alpha-D-glucose = a 1,2-diacyl-3-O-(beta-D-Glc-(1-&gt;6)-beta-D-Glc-(1-&gt;6)-beta-D-Glc)-sn-glycerol + UDP + H(+). It carries out the reaction a 1,2-diacyl-sn-glycerol + UDP-alpha-D-glucose = a 1,2-diacyl-3-O-(beta-D-glucopyranosyl)-sn-glycerol + UDP + H(+). It functions in the pathway glycolipid metabolism; diglucosyl-diacylglycerol biosynthesis. Processive glucosyltransferase involved in the biosynthesis of both the bilayer- and non-bilayer-forming membrane glucolipids. Is able to successively transfer up to three glucosyl residues to diacylglycerol (DAG), thereby catalyzing the formation of beta-monoglucosyl-DAG (3-O-(beta-D-glucopyranosyl)-1,2-diacyl-sn-glycerol), beta-diglucosyl-DAG (3-O-(beta-D-glucopyranosyl-beta-(1-&gt;6)-D-glucopyranosyl)-1,2-diacyl-sn-glycerol) and beta-triglucosyl-DAG (3-O-(beta-D-glucopyranosyl-beta-(1-&gt;6)-D-glucopyranosyl-beta-(1-&gt;6)-D-glucopyranosyl)-1,2-diacyl-sn-glycerol). Beta-diglucosyl-DAG is the predominant glycolipid found in Bacillales and is also used as a membrane anchor for lipoteichoic acid (LTA). The chain is Processive diacylglycerol beta-glucosyltransferase from Bacillus cereus (strain ATCC 10987 / NRS 248).